Consider the following 444-residue polypeptide: Phosphoglucosamine mutase (444 aa).

S102 functions as the Phosphoserine intermediate in the catalytic mechanism. Positions 102, 241, 243, and 245 each coordinate Mg(2+). S102 carries the phosphoserine modification.

This sequence belongs to the phosphohexose mutase family. Mg(2+) is required as a cofactor. Post-translationally, activated by phosphorylation.

The enzyme catalyses alpha-D-glucosamine 1-phosphate = D-glucosamine 6-phosphate. In terms of biological role, catalyzes the conversion of glucosamine-6-phosphate to glucosamine-1-phosphate. The polypeptide is Phosphoglucosamine mutase (Acidovorax sp. (strain JS42)).